We begin with the raw amino-acid sequence, 261 residues long: Protein FAM78B (261 aa).

Belongs to the FAM78 family.

The polypeptide is Protein FAM78B (FAM78B) (Homo sapiens (Human)).